The following is a 417-amino-acid chain: Histidine--tRNA ligase (417 aa).

Belongs to the class-II aminoacyl-tRNA synthetase family. In terms of assembly, homodimer.

The protein resides in the cytoplasm. It catalyses the reaction tRNA(His) + L-histidine + ATP = L-histidyl-tRNA(His) + AMP + diphosphate + H(+). This is Histidine--tRNA ligase from Oleidesulfovibrio alaskensis (strain ATCC BAA-1058 / DSM 17464 / G20) (Desulfovibrio alaskensis).